We begin with the raw amino-acid sequence, 125 residues long: Holo-[acyl-carrier-protein] synthase (125 aa).

Residues Asp8 and Glu57 each coordinate Mg(2+).

It belongs to the P-Pant transferase superfamily. AcpS family. The cofactor is Mg(2+).

The protein resides in the cytoplasm. It carries out the reaction apo-[ACP] + CoA = holo-[ACP] + adenosine 3',5'-bisphosphate + H(+). Transfers the 4'-phosphopantetheine moiety from coenzyme A to a Ser of acyl-carrier-protein. This is Holo-[acyl-carrier-protein] synthase from Neisseria meningitidis serogroup A / serotype 4A (strain DSM 15465 / Z2491).